We begin with the raw amino-acid sequence, 347 residues long: Major capsid protein (347 aa).

This sequence belongs to the baculoviridae major capsid protein family.

The protein localises to the virion. Functionally, most abundant structural protein of the nucleocapsid produced during the infection cycle. The monomers are arranged in stacked rings around the nucleoprotein core. This Autographa californica nuclear polyhedrosis virus (AcMNPV) protein is Major capsid protein (P39).